A 348-amino-acid polypeptide reads, in one-letter code: UDP-glucose 4-epimerase (348 aa).

A substrate-binding site is contributed by Thr125. The active-site Proton acceptor is the Tyr149.

Belongs to the NAD(P)-dependent epimerase/dehydratase family. NAD(+) is required as a cofactor.

The catalysed reaction is UDP-alpha-D-glucose = UDP-alpha-D-galactose. Its pathway is carbohydrate metabolism; galactose metabolism. The protein operates within glycan metabolism; exopolysaccharide biosynthesis. This Azospirillum brasilense protein is UDP-glucose 4-epimerase (exoB).